Consider the following 1083-residue polypeptide: uncharacterized protein (1083 aa).

The segment at 93-145 (SKGNLRYVPTTSRNPSNTDTYSSSIDISSSSSSINTSDDSSGKTSSNDLSDMS) is disordered. Residues 108–145 (SNTDTYSSSIDISSSSSSINTSDDSSGKTSSNDLSDMS) are compositionally biased toward low complexity.

The protein resides in the virion. This is an uncharacterized protein from Acanthamoeba polyphaga (Amoeba).